Reading from the N-terminus, the 495-residue chain is UDP-N-acetylmuramoyl-L-alanyl-D-glutamate--2,6-diaminopimelate ligase (495 aa).

UDP-N-acetyl-alpha-D-muramoyl-L-alanyl-D-glutamate is bound by residues L27, S29, and H44–A46. G116 to T122 contributes to the ATP binding site. UDP-N-acetyl-alpha-D-muramoyl-L-alanyl-D-glutamate-binding positions include N157, T158 to T159, S185, Q191, and R193. N6-carboxylysine is present on K225. Meso-2,6-diaminopimelate-binding positions include R390, D414–R417, G465, and E469. A Meso-diaminopimelate recognition motif motif is present at residues D414–R417.

The protein belongs to the MurCDEF family. MurE subfamily. It depends on Mg(2+) as a cofactor. Post-translationally, carboxylation is probably crucial for Mg(2+) binding and, consequently, for the gamma-phosphate positioning of ATP.

It localises to the cytoplasm. The enzyme catalyses UDP-N-acetyl-alpha-D-muramoyl-L-alanyl-D-glutamate + meso-2,6-diaminopimelate + ATP = UDP-N-acetyl-alpha-D-muramoyl-L-alanyl-gamma-D-glutamyl-meso-2,6-diaminopimelate + ADP + phosphate + H(+). Its pathway is cell wall biogenesis; peptidoglycan biosynthesis. In terms of biological role, catalyzes the addition of meso-diaminopimelic acid to the nucleotide precursor UDP-N-acetylmuramoyl-L-alanyl-D-glutamate (UMAG) in the biosynthesis of bacterial cell-wall peptidoglycan. This chain is UDP-N-acetylmuramoyl-L-alanyl-D-glutamate--2,6-diaminopimelate ligase, found in Enterobacter sp. (strain 638).